The primary structure comprises 252 residues: Phosphate import ATP-binding protein PstB (252 aa).

Residues 5–247 form the ABC transporter domain; it reads VKIDKLNVHF…PEKKQTEDYI (243 aa). 37–44 provides a ligand contact to ATP; sequence GPSGCGKS.

Belongs to the ABC transporter superfamily. Phosphate importer (TC 3.A.1.7) family. In terms of assembly, the complex is composed of two ATP-binding proteins (PstB), two transmembrane proteins (PstC and PstA) and a solute-binding protein (PstS).

Its subcellular location is the cell inner membrane. It catalyses the reaction phosphate(out) + ATP + H2O = ADP + 2 phosphate(in) + H(+). Part of the ABC transporter complex PstSACB involved in phosphate import. Responsible for energy coupling to the transport system. This chain is Phosphate import ATP-binding protein PstB, found in Geobacter metallireducens (strain ATCC 53774 / DSM 7210 / GS-15).